Consider the following 196-residue polypeptide: FMN-dependent NADH:quinone oxidoreductase (196 aa).

Ser10 contacts FMN.

It belongs to the azoreductase type 1 family. In terms of assembly, homodimer. The cofactor is FMN.

It carries out the reaction 2 a quinone + NADH + H(+) = 2 a 1,4-benzosemiquinone + NAD(+). It catalyses the reaction N,N-dimethyl-1,4-phenylenediamine + anthranilate + 2 NAD(+) = 2-(4-dimethylaminophenyl)diazenylbenzoate + 2 NADH + 2 H(+). Quinone reductase that provides resistance to thiol-specific stress caused by electrophilic quinones. Functionally, also exhibits azoreductase activity. Catalyzes the reductive cleavage of the azo bond in aromatic azo compounds to the corresponding amines. The polypeptide is FMN-dependent NADH:quinone oxidoreductase (Cereibacter sphaeroides (strain ATCC 17023 / DSM 158 / JCM 6121 / CCUG 31486 / LMG 2827 / NBRC 12203 / NCIMB 8253 / ATH 2.4.1.) (Rhodobacter sphaeroides)).